The sequence spans 540 residues: MFSIFKKKTSVQGTDSEIDEKITVKAKDKVVVSTEDEEVTTIVSSTKSTQVTNDSPWQDPTYFSSFGKELMFIATCMLAQLLNQAGQTHALCIMNVLSKSFNSEANNQAWLMASFPLAAGSFILISGRLGDIYGLKKMLIVGYVIVIVWSIISGLSKYSNSDAFFITSRAFQGVGIAFILPNIMGLVGHVYKVGSFRKNIVISFIGACAPTGGMFGGLFGGLIVTEDPNQWPWVFYAFGIATFLSLLMAWYSIPNNVPTNIHGLSMDWTGSALAIIGLILFNFVWNQAPIVGWDKPYIIVLLIISVIFLVAFFVYESKYAEVPLLPRAMTKNRHMIMILLAVFLGWGSFGIWTFYYVSFQLNLRHYSPVWTGGTYFVFVIFGSMAAFFVAFSIKRLGPALLLCFSLMAFDAGSIMFSVLPVEQSYWKLNFAMQAILCFGMDLSFPASSIILSDGLPMQYQGMAGSLVNTVINYSASLCLGMGGTVEHQINKSGNDLLKGYRAAVYLGVGLASLGVVISVTYMLENLWNRHRKSEDRSLEA.

At 1–61 the chain is on the cytoplasmic side; sequence MFSIFKKKTS…TNDSPWQDPT (61 aa). The helical transmembrane segment at 62-82 threads the bilayer; that stretch reads YFSSFGKELMFIATCMLAQLL. At 83 to 108 the chain is on the extracellular side; the sequence is NQAGQTHALCIMNVLSKSFNSEANNQ. Residues 109–129 traverse the membrane as a helical segment; sequence AWLMASFPLAAGSFILISGRL. Residues 130–131 are Cytoplasmic-facing; sequence GD. A helical transmembrane segment spans residues 132-152; sequence IYGLKKMLIVGYVIVIVWSII. Over 153 to 169 the chain is Extracellular; sequence SGLSKYSNSDAFFITSR. A helical membrane pass occupies residues 170–190; it reads AFQGVGIAFILPNIMGLVGHV. The Cytoplasmic segment spans residues 191–203; the sequence is YKVGSFRKNIVIS. The helical transmembrane segment at 204–224 threads the bilayer; sequence FIGACAPTGGMFGGLFGGLIV. The Extracellular segment spans residues 225 to 232; sequence TEDPNQWP. Residues 233-253 traverse the membrane as a helical segment; it reads WVFYAFGIATFLSLLMAWYSI. The Cytoplasmic segment spans residues 254–272; sequence PNNVPTNIHGLSMDWTGSA. A helical membrane pass occupies residues 273–293; the sequence is LAIIGLILFNFVWNQAPIVGW. At 294–295 the chain is on the extracellular side; that stretch reads DK. A helical transmembrane segment spans residues 296 to 316; that stretch reads PYIIVLLIISVIFLVAFFVYE. At 317-334 the chain is on the cytoplasmic side; that stretch reads SKYAEVPLLPRAMTKNRH. A helical transmembrane segment spans residues 335-355; the sequence is MIMILLAVFLGWGSFGIWTFY. At 356-372 the chain is on the extracellular side; the sequence is YVSFQLNLRHYSPVWTG. The chain crosses the membrane as a helical span at residues 373 to 393; sequence GTYFVFVIFGSMAAFFVAFSI. Over 394–398 the chain is Cytoplasmic; the sequence is KRLGP. The helical transmembrane segment at 399–419 threads the bilayer; it reads ALLLCFSLMAFDAGSIMFSVL. At 420–429 the chain is on the extracellular side; the sequence is PVEQSYWKLN. Residues 430-450 form a helical membrane-spanning segment; sequence FAMQAILCFGMDLSFPASSII. The Cytoplasmic portion of the chain corresponds to 451–461; the sequence is LSDGLPMQYQG. A helical membrane pass occupies residues 462-482; sequence MAGSLVNTVINYSASLCLGMG. The Extracellular segment spans residues 483–502; sequence GTVEHQINKSGNDLLKGYRA. The chain crosses the membrane as a helical span at residues 503–523; that stretch reads AVYLGVGLASLGVVISVTYML. The Cytoplasmic segment spans residues 524–540; sequence ENLWNRHRKSEDRSLEA.

It belongs to the major facilitator superfamily.

Its subcellular location is the membrane. This is an uncharacterized protein from Saccharomyces cerevisiae (strain ATCC 204508 / S288c) (Baker's yeast).